Reading from the N-terminus, the 529-residue chain is Neuronal acetylcholine receptor subunit alpha-2 (529 aa).

An N-terminal signal peptide occupies residues 1-26 (MGPSCPVFLSFTKLSLWWLLLTPAGG). The disordered stretch occupies residues 27–56 (EEAKRPPPRAPGDPLSSPSPTALPQGGSHT). At 27–264 (EEAKRPPPRA…VTYAFIIRRL (238 aa)) the chain is on the extracellular side. N-linked (GlcNAc...) asparagine glycosylation is found at Asn-79 and Asn-129. A disulfide bond links Cys-183 and Cys-197. N-linked (GlcNAc...) asparagine glycosylation is present at Asn-235. Residues Cys-247 and Cys-248 are joined by a disulfide bond. The next 3 helical transmembrane spans lie at 265-289 (PLFY…VFYL), 297-315 (ITLC…LLIT), and 331-352 (YLLF…VLNV). Topologically, residues 353–502 (HHRSPSTHTM…WKYVAMVIDR (150 aa)) are cytoplasmic. Residues 503-521 (IFLWLFIIVCFLGTIGLFL) traverse the membrane as a helical segment.

Belongs to the ligand-gated ion channel (TC 1.A.9) family. Acetylcholine receptor (TC 1.A.9.1) subfamily. Alpha-2/CHRNA2 sub-subfamily. As to quaternary structure, neuronal AChR is composed of two different types of subunits: alpha and non-alpha (beta). CHRNA2/alpha-2 subunit can be combined to CHRNB2/beta-2 or CHRNB4/beta-4 to give rise to functional receptors. Both CHRNA2:CHRNB2 and CHRNA2:CHRNB4 nAChR complexes are heteropentamers with two subtypes: LS (low agonist sensitivity) with a (CHRNA2)3:(CHRNB2/4)2 and HS (high agonist sensitivity) with a (CHRNA2)2:(CHRNB2/4)3 stoichiometries; the subtypes differ in their subunit binding interfaces which are involved in ligand binding.

The protein resides in the synaptic cell membrane. The protein localises to the cell membrane. It catalyses the reaction Ca(2+)(in) = Ca(2+)(out). The catalysed reaction is K(+)(in) = K(+)(out). The enzyme catalyses Na(+)(in) = Na(+)(out). In terms of biological role, component of neuronal acetylcholine receptors (nAChRs) that function as pentameric, ligand-gated cation channels with high calcium permeability among other activities. nAChRs are excitatory neurotrasnmitter receptors formed by a collection of nAChR subunits known to mediate synaptic transmission in the nervous system and the neuromuscular junction. Each nAchR subunit confers differential attributes to channel properties, including activation, deactivation and desensitization kinetics, pH sensitivity, cation permeability, and binding to allosteric modulators. CHRNA2 forms heteropentameric neuronal acetylcholine receptors with CHRNB2 and CHRNB4 and plays a role in nicotine dependence. The chain is Neuronal acetylcholine receptor subunit alpha-2 (CHRNA2) from Pan troglodytes (Chimpanzee).